Reading from the N-terminus, the 78-residue chain is Acyl carrier protein (78 aa).

The Carrier domain occupies 2–77 (STIEERVKKI…EAIDYVTAHA (76 aa)). An O-(pantetheine 4'-phosphoryl)serine modification is found at S37.

It belongs to the acyl carrier protein (ACP) family. 4'-phosphopantetheine is transferred from CoA to a specific serine of apo-ACP by AcpS. This modification is essential for activity because fatty acids are bound in thioester linkage to the sulfhydryl of the prosthetic group.

The protein localises to the cytoplasm. The protein operates within lipid metabolism; fatty acid biosynthesis. Functionally, carrier of the growing fatty acid chain in fatty acid biosynthesis. The polypeptide is Acyl carrier protein (Ectopseudomonas mendocina (strain ymp) (Pseudomonas mendocina)).